We begin with the raw amino-acid sequence, 331 residues long: CRISPR-associated endonuclease Cas1 (331 aa).

3 residues coordinate Mn(2+): glutamate 158, histidine 223, and aspartate 238.

It belongs to the CRISPR-associated endonuclease Cas1 family. As to quaternary structure, homodimer, forms a heterotetramer with a Cas2 homodimer. Requires Mg(2+) as cofactor. Mn(2+) is required as a cofactor.

CRISPR (clustered regularly interspaced short palindromic repeat), is an adaptive immune system that provides protection against mobile genetic elements (viruses, transposable elements and conjugative plasmids). CRISPR clusters contain spacers, sequences complementary to antecedent mobile elements, and target invading nucleic acids. CRISPR clusters are transcribed and processed into CRISPR RNA (crRNA). Acts as a dsDNA endonuclease. Involved in the integration of spacer DNA into the CRISPR cassette. Plasmid targeted by CRISPR locus P1 transform wild-type cells very poorly. The sequence is that of CRISPR-associated endonuclease Cas1 from Haloferax volcanii (strain ATCC 29605 / DSM 3757 / JCM 8879 / NBRC 14742 / NCIMB 2012 / VKM B-1768 / DS2) (Halobacterium volcanii).